Here is a 190-residue protein sequence, read N- to C-terminus: Probable RNA-binding protein 18 (190 aa).

Residues 25-106 enclose the RRM domain; sequence HRLWIGNLDP…KKLVVRWAHA (82 aa). The tract at residues 166 to 190 is disordered; it reads VYSYFKPPDKKRTTPYSRTAWKSRR.

The protein is Probable RNA-binding protein 18 (RBM18) of Bos taurus (Bovine).